Reading from the N-terminus, the 354-residue chain is Uroporphyrinogen decarboxylase (354 aa).

Residues 27–31, D77, Y154, T209, and H327 contribute to the substrate site; that span reads RQAGR.

Belongs to the uroporphyrinogen decarboxylase family. In terms of assembly, homodimer.

The protein resides in the cytoplasm. It catalyses the reaction uroporphyrinogen III + 4 H(+) = coproporphyrinogen III + 4 CO2. It functions in the pathway porphyrin-containing compound metabolism; protoporphyrin-IX biosynthesis; coproporphyrinogen-III from 5-aminolevulinate: step 4/4. In terms of biological role, catalyzes the decarboxylation of four acetate groups of uroporphyrinogen-III to yield coproporphyrinogen-III. This Pseudomonas entomophila (strain L48) protein is Uroporphyrinogen decarboxylase.